The following is a 481-amino-acid chain: Alginate biosynthesis protein AlgA (481 aa).

Belongs to the mannose-6-phosphate isomerase type 2 family. As to quaternary structure, monomer. Co(2+) is required as a cofactor.

The catalysed reaction is D-mannose 6-phosphate = D-fructose 6-phosphate. It catalyses the reaction alpha-D-mannose 1-phosphate + GTP + H(+) = GDP-alpha-D-mannose + diphosphate. It functions in the pathway nucleotide-sugar biosynthesis; GDP-alpha-D-mannose biosynthesis; GDP-alpha-D-mannose from alpha-D-mannose 1-phosphate (GTP route): step 1/1. The protein operates within nucleotide-sugar biosynthesis; GDP-alpha-D-mannose biosynthesis; alpha-D-mannose 1-phosphate from D-fructose 6-phosphate: step 1/2. Produces a precursor for alginate polymerization. The alginate layer provides a protective barrier against host immune defenses and antibiotics. The polypeptide is Alginate biosynthesis protein AlgA (algA) (Pseudomonas aeruginosa (strain ATCC 15692 / DSM 22644 / CIP 104116 / JCM 14847 / LMG 12228 / 1C / PRS 101 / PAO1)).